Here is a 441-residue protein sequence, read N- to C-terminus: MSGEKEEASLRMFGAYGEPEERRDVLESSGVSSQPEPQVQQQLGSLLGVPWQPPGPPIQHSPADQETSTVTQQQWHLQGLGRSELQAAGLPDAQPGEAAESSPSFLLGSEVGQPYSSSSPSEEVLSLLRAIPPIPDEVVVRQKRAPQGSWKVGTLFHGKRVYAVAISGSTHHVYTCGSGYIRVWDESALHAGEKAPRAQLDLQHPQDRVVTCKLFPDERSLITGGASQAVTLWDLAPTPQVRAQLTSTGPTCYSLAVSSDAHICLACFHGFVEIWDLQNQILIRKHEVPVYGSRCVDITGNIFWTGGEDTILYSWDLRSYQRLHQHNLQNEILSITHDPGEEWVLAGLRTSDIVFLHTRRNEQFKALMKKYTRHHSLKFASCGSYFVTAIDTRLSGLEAPSLQKLFQIEESSGILCCDVSSDNQYLVMGSSSSATIYQLLY.

2 disordered regions span residues 1-77 and 91-119; these read MSGE…QWHL and PDAQ…SSSS. The span at 27–49 shows a compositional bias: low complexity; sequence ESSGVSSQPEPQVQQQLGSLLGV. A compositionally biased stretch (polar residues) spans 62–76; it reads PADQETSTVTQQQWH. Over residues 108-119 the composition is skewed to low complexity; the sequence is GSEVGQPYSSSS. WD repeat units lie at residues 156 to 194, 204 to 243, 247 to 285, 286 to 325, and 409 to 441; these read FHGK…AGEK, HPQD…QVRA, STGP…LIRK, HEVP…RLHQ, and EESS…QLLY.

The protein belongs to the WD repeat Groucho/TLE family.

The sequence is that of Transducin-like enhancer protein 7 from Homo sapiens (Human).